A 265-amino-acid chain; its full sequence is Undecaprenyl-diphosphatase (265 aa).

7 helical membrane passes run 38–58, 75–95, 108–128, 135–155, 181–201, 215–235, and 244–264; these read RSDF…CLAL, RDYV…GLIV, PVAW…HFAG, VVTW…GVFP, FVFM…LLEM, VAVA…WLLG, and VFAV…PAAA.

This sequence belongs to the UppP family.

It is found in the cell inner membrane. It carries out the reaction di-trans,octa-cis-undecaprenyl diphosphate + H2O = di-trans,octa-cis-undecaprenyl phosphate + phosphate + H(+). In terms of biological role, catalyzes the dephosphorylation of undecaprenyl diphosphate (UPP). Confers resistance to bacitracin. This Xanthomonas axonopodis pv. citri (strain 306) protein is Undecaprenyl-diphosphatase.